Here is a 536-residue protein sequence, read N- to C-terminus: E3 ubiquitin-protein ligase Godzilla (536 aa).

A signal peptide spans 1 to 21; it reads MSKRSCQILTLLGLCLVCHEA. At 22–174 the chain is on the extracellular side; that stretch reads TLVGGHVLVY…DELPFNINTQ (153 aa). In terms of domain architecture, PA spans 89 to 151; sequence FVALVARGEC…FVGHTTGKAL (63 aa). 2 N-linked (GlcNAc...) asparagine glycosylation sites follow: N109 and N132. The chain crosses the membrane as a helical span at residues 175 to 195; sequence LILPFSILIGMCFIIMVIYMI. Residues 196-536 lie on the Cytoplasmic side of the membrane; it reads YKCIREQRRL…HSASDRQFLI (341 aa). Residues 235–277 form an RING-type; atypical zinc finger; that stretch reads CVICLEDFIEDDKLRVLPCSHPYHTHCIDPWLTENRRVCPICK. Disordered stretches follow at residues 287 to 334 and 350 to 372; these read RASR…GAAG and HGTFRRGHAGRNPFEESQSSDDE. The span at 307–334 shows a compositional bias: low complexity; that stretch reads TPLLQQQQSNGRQVGQVSSASSAGGAAG.

It belongs to the Godzilla family.

Its subcellular location is the endosome membrane. The catalysed reaction is S-ubiquitinyl-[E2 ubiquitin-conjugating enzyme]-L-cysteine + [acceptor protein]-L-lysine = [E2 ubiquitin-conjugating enzyme]-L-cysteine + N(6)-ubiquitinyl-[acceptor protein]-L-lysine.. It participates in protein modification; protein ubiquitination. In terms of biological role, endosomal E3 ubiquitin-protein ligase that regulates the recycling endosome pathway by mediating ubiquitination of Synaptobrevin (Syb). Also acts as a regulator of transcytosis in wing imaginal disks by catalyzing ubiquitination of Syb: ubiquitination of Syb promotes transcytosis of wingless (wg) to the basolateral surface. This is E3 ubiquitin-protein ligase Godzilla from Drosophila melanogaster (Fruit fly).